The following is an 862-amino-acid chain: MEVTSCLTLKDLISTKKNKSDPVADGRSAQKENMFDRFKISPRLPLRSEPIDLSKQKSFTPERIPVTPVKVAERPQADPWTPTANLKMLISAASPEIRDREKKKELFRPIENNGIEETDTDLQLMDSVDDIDDLEKRPSRKQKSLGLLCQKFLARYPSYPISTEKMTISLDEAASSLGVERRRIYDIVNVLESLHLVSRVAKNQYCWHGQHNLNETLRNLQHIGEKQNYRAQIACFNLRDMGMEYKCDEQEKGCHIDHLNTPLIELSEADCPSVSSSSRKDKSLRIMSQKFVMLFLVSTTKIITLEIAAKILIEESQDAADHSKFKTKVRRLYDIANVLTSLGLIKKVHVTDERGRKPAFKWIGPVDFTAEDQKMEVTTTIPSPDSKKDACNLSPASDRVKQRLFRHSSFNIVQSFSAVKRKVCSHPCSPQKPQGVESSDSYASKMAHLATICKPKAEEDSKNGNIENSSLPFSVVVPMPVDSDYRVKPVVHQVPLVSHKTVCEPLGIMPPSQSNEDCTNHGFVPNQPYMYLPSNSVFMLCGNLSEGKATDHLAMSLYPVPGSDSPTLEETTMSKQERPTKRQLNDKDDAPLSLVLPKKSRVDNTQSLQKPICKTTTPEQLQHVSREEEYNTEPVTKHSNVGETTEEVGSRILPHENVHLHPAVPPQFLYVPTTQGLNSFNFLLPANHSAGLSQSQLASLNVPYVMVPSSALTAFPFICSPAVSSGASGSTLNGRMNFSQAGTSSPTRLIIGAPQMAVPQPPEPAVDQTKNLSPLSVSPVSAKCASSKADSHDSLSQSIHTAKLHKSPTPSTPKSIRPLHKDAFFKTPGSLDVSSSRKPQRTQTRTSSSAQRKLDIDSSAGN.

DNA-binding regions lie at residues 140 to 209 and 279 to 364; these read RKQK…CWHG and RKDK…KWIG. Disordered stretches follow at residues 561–592, 617–643, and 788–862; these read PGSDSPTLEETTMSKQERPTKRQLNDKDDAPL, TPEQLQHVSREEEYNTEPVTKHSNVGE, and KADS…SAGN. A compositionally biased stretch (polar residues) spans 564–574; it reads DSPTLEETTMS. A compositionally biased stretch (basic and acidic residues) spans 575–590; sequence KQERPTKRQLNDKDDA. 2 stretches are compositionally biased toward polar residues: residues 633-643 and 832-851; these read EPVTKHSNVGE and DVSSSRKPQRTQTRTSSSAQ.

It belongs to the E2F/DP family. Homodimer and heterodimer: mainly forms homodimers and, to a lesser extent, heterodimers with e2f8.

The protein resides in the nucleus. Its function is as follows. Atypical E2F transcription factor that participates in various processes such as angiogenesis and polyploidization of specialized cells. Mainly acts as a transcription repressor that binds DNA independently of DP proteins and specifically recognizes the E2 recognition site 5'-TTTC[CG]CGC-3'. Directly represses transcription of classical E2F transcription factors such as e2f1. Acts as a regulator of S-phase by recognizing and binding the E2-related site 5'-TTCCCGCC-3' and mediating repression of G1/S-regulated genes. Acts as a promoter of sprouting angiogenesis, possibly by acting as a transcription activator. In Xenopus tropicalis (Western clawed frog), this protein is Transcription factor E2F7 (e2f7).